A 1009-amino-acid chain; its full sequence is Protein-tyrosine kinase 2-beta (1009 aa).

An FERM domain is found at 39–359 (RILKVCFYSN…GYCRLQGEHK (321 aa)). Phosphoserine occurs at positions 361, 375, and 399. Tyr402 is modified (phosphotyrosine; by autocatalysis). The Protein kinase domain maps to 425 to 683 (VVLNRILGEG…ELVCSLSDIY (259 aa)). ATP-binding positions include 431-439 (LGEGFFGEV), Lys457, and 503-509 (ELYPYGE). Residue Asp549 is the Proton acceptor of the active site. 3 positions are modified to phosphotyrosine: Tyr579, Tyr580, and Tyr722. Residues 702-725 (PKILEPTAFQEPPPKPSRPKYKHP) form a disordered region. Ser762 bears the Phosphoserine mark. At Thr765 the chain carries Phosphothreonine. The interval 801-1009 (KIKMRQVLDR…VANLAHPPAE (209 aa)) is interaction with TGFB1I1. At Tyr834 the chain carries Phosphotyrosine. Ser839 carries the post-translational modification Phosphoserine. Residue Thr842 is modified to Phosphothreonine. The residue at position 849 (Tyr849) is a Phosphotyrosine. Ser866 is modified (phosphoserine). A focal adhesion targeting (FAT) region spans residues 868–1009 (QPTANLDRTD…VANLAHPPAE (142 aa)). Phosphotyrosine is present on Tyr881.

It belongs to the protein kinase superfamily. Tyr protein kinase family. FAK subfamily. As to quaternary structure, homodimer, or homooligomer. Interacts with NPHP1, ASAP1, ASAP2, ARHGAP26, SKAP2 and TGFB1I1. The Tyr-402 phosphorylated form interacts with SRC (via SH2 domain) and SRC family members. Forms a signaling complex with EPHA1, LCK and phosphatidylinositol 3-kinase; upon activation by EFNA1. Interacts with GRB2 (via SH2 domain). Interacts with P53/TP53 and MDM2. Interacts with MYLK. Interacts with BCAR1. Interacts with RB1CC1. Interacts with RHOU. Interacts with VAV1. Interacts with PDPK1. Interacts with LPXN and PTPN12. Interacts with SIRPA and SH2D3C. Interacts (hypophosphorylated) with PXN. Interacts with ARHGAP10. Interacts with KCNA2. Phosphorylated on tyrosine residues in response to various stimuli that elevate the intracellular calcium concentration; this activation is indirect and may be mediated by production of reactive oxygen species (ROS). Tyr-402 is the major autophosphorylation site, but other kinases can also phosphorylate Tyr-402. Autophosphorylation occurs in trans, i.e. one subunit of the dimeric receptor phosphorylates tyrosine residues on the other subunit. Phosphorylation at Tyr-402 promotes interaction with SRC and SRC family members, leading to phosphorylation at Tyr-579; Tyr-580 and Tyr-881. Phosphorylation at Tyr-881 is important for interaction with GRB2. Phosphorylated on tyrosine residues upon activation of FGR and PKC. Recruitment by NPHP1 to cell matrix adhesions initiates Tyr-402 phosphorylation. In monocytes, adherence to substrata is required for tyrosine phosphorylation and kinase activation. Angiotensin II, thapsigargin and L-alpha-lysophosphatidic acid (LPA) also induce autophosphorylation and increase kinase activity. Phosphorylation by MYLK promotes ITGB2 activation and is thus essential to trigger neutrophil transmigration during lung injury. Dephosphorylated by PTPN12. As to expression, highly expressed in pulmonary vein endothelial cells, lung and brain (at protein level). Isoform 1 is expressed at high levels in the brain (hippocampus, cerebral cortex and olfactory bulb) and poorly in the spleen and other tissues, whereas isoforms 2 and 3 are expressed in the spleen and brain (highest in cerebellum).

The protein resides in the cytoplasm. Its subcellular location is the perinuclear region. It localises to the cell membrane. It is found in the cell projection. The protein localises to the lamellipodium. The protein resides in the cell cortex. Its subcellular location is the nucleus. It localises to the cell junction. It is found in the focal adhesion. The catalysed reaction is L-tyrosyl-[protein] + ATP = O-phospho-L-tyrosyl-[protein] + ADP + H(+). With respect to regulation, activated in response to stimuli that lead to increased intracellular Ca(2+) levels; this activation is indirect and may be mediated by calcium-mediated production of reactive oxygen species (ROS). Activated by autophosphorylation at Tyr-402; this creates a binding site for SRC family kinases and leads to phosphorylation at additional tyrosine residues. Phosphorylation at Tyr-402, Tyr-579 and Tyr-580 is required for optimal kinase activity. Its function is as follows. Non-receptor protein-tyrosine kinase that regulates reorganization of the actin cytoskeleton, cell polarization, cell migration, adhesion, spreading and bone remodeling. Plays a role in the regulation of the humoral immune response, and is required for normal levels of marginal B-cells in the spleen and normal migration of splenic B-cells. Required for normal macrophage polarization and migration towards sites of inflammation. Regulates cytoskeleton rearrangement and cell spreading in T-cells, and contributes to the regulation of T-cell responses. Promotes osteoclastic bone resorption; this requires both PTK2B/PYK2 and SRC. May inhibit differentiation and activity of osteoprogenitor cells. Functions in signaling downstream of integrin and collagen receptors, immune receptors, G-protein coupled receptors (GPCR), cytokine, chemokine and growth factor receptors, and mediates responses to cellular stress. Forms multisubunit signaling complexes with SRC and SRC family members upon activation; this leads to the phosphorylation of additional tyrosine residues, creating binding sites for scaffold proteins, effectors and substrates. Regulates numerous signaling pathways. Promotes activation of phosphatidylinositol 3-kinase and of the AKT1 signaling cascade. Promotes activation of NOS3. Regulates production of the cellular messenger cGMP. Promotes activation of the MAP kinase signaling cascade, including activation of MAPK1/ERK2, MAPK3/ERK1 and MAPK8/JNK1. Promotes activation of Rho family GTPases, such as RHOA and RAC1. Recruits the ubiquitin ligase MDM2 to P53/TP53 in the nucleus, and thereby regulates P53/TP53 activity, P53/TP53 ubiquitination and proteasomal degradation. Acts as a scaffold, binding to both PDPK1 and SRC, thereby allowing SRC to phosphorylate PDPK1 at 'Tyr-9, 'Tyr-373', and 'Tyr-376'. Promotes phosphorylation of NMDA receptors by SRC family members, and thereby contributes to the regulation of NMDA receptor ion channel activity and intracellular Ca(2+) levels. May also regulate potassium ion transport by phosphorylation of potassium channel subunits. Phosphorylates SRC; this increases SRC kinase activity. Phosphorylates ASAP1, NPHP1, KCNA2 and SHC1. Promotes phosphorylation of ASAP2, RHOU and PXN; this requires both SRC and PTK2/PYK2. The protein is Protein-tyrosine kinase 2-beta (Ptk2b) of Rattus norvegicus (Rat).